Here is a 218-residue protein sequence, read N- to C-terminus: Cytochrome b6 (218 aa).

Residues 35–55 traverse the membrane as a helical segment; that stretch reads IFYCLGGITLVCFLIQFATGF. Residue Cys-38 participates in heme c binding. 2 residues coordinate heme b: His-89 and His-103. 3 consecutive transmembrane segments (helical) span residues 93-113, 119-139, and 189-209; these read ASMMVLMLILHVFRVYLTGGF, LTWVTGVTMAVITVSFGVTGY, and LHTFVLPWLLAVFMLAHFLMI. Heme b is bound by residues His-190 and His-205.

The protein belongs to the cytochrome b family. PetB subfamily. As to quaternary structure, the 4 large subunits of the cytochrome b6-f complex are cytochrome b6, subunit IV (17 kDa polypeptide, PetD), cytochrome f and the Rieske protein, while the 4 small subunits are PetG, PetL, PetM and PetN. The complex functions as a dimer. It depends on heme b as a cofactor. Requires heme c as cofactor.

Its subcellular location is the cellular thylakoid membrane. In terms of biological role, component of the cytochrome b6-f complex, which mediates electron transfer between photosystem II (PSII) and photosystem I (PSI), cyclic electron flow around PSI, and state transitions. The protein is Cytochrome b6 of Synechococcus sp. (strain RCC307).